The primary structure comprises 99 residues: Sarcosine oxidase subunit delta (99 aa).

4 residues coordinate Zn(2+): cysteine 6, cysteine 9, histidine 59, and cysteine 63.

It belongs to the SoxD family. In terms of assembly, heterotetramer composed of subunits alpha (SoxA), beta (SoxB), gamma (SoxG) and delta (SoxD).

It is found in the cytoplasm. It carries out the reaction sarcosine + (6S)-5,6,7,8-tetrahydrofolate + O2 = (6R)-5,10-methylene-5,6,7,8-tetrahydrofolate + glycine + H2O2. It catalyses the reaction sarcosine + O2 + H2O = formaldehyde + glycine + H2O2. With respect to regulation, inhibited by Zn(2+), Cu(2+), Cd(2+), Hg(2+), Ag(+), p-chloromercuribenzoate (p-CMB), iodoacetamide, N-ethylmaleimide, CN(-), o-phenanthroline and sodium lauryl sulfate. In terms of biological role, in the presence of tetrahydrofolate, catalyzes the oxidative demethylation of sarcosine to yield glycine, 5,10-methylenetetrahydrofolate and hydrogen peroxide. In the absence of tetrahydrofolate, catalyzes the oxidative demethylation of sarcosine to yield glycine, formaldehyde and hydrogen peroxide. Can also use N-methyl-L-alanine and N-ethyl-L-glycine. Is very specific for oxygen as an acceptor. This is Sarcosine oxidase subunit delta from Corynebacterium sp. (strain U-96).